The chain runs to 166 residues: Large ribosomal subunit protein uL10 (166 aa).

This sequence belongs to the universal ribosomal protein uL10 family. Part of the ribosomal stalk of the 50S ribosomal subunit. The N-terminus interacts with L11 and the large rRNA to form the base of the stalk. The C-terminus forms an elongated spine to which L12 dimers bind in a sequential fashion forming a multimeric L10(L12)X complex.

In terms of biological role, forms part of the ribosomal stalk, playing a central role in the interaction of the ribosome with GTP-bound translation factors. This Oceanobacillus iheyensis (strain DSM 14371 / CIP 107618 / JCM 11309 / KCTC 3954 / HTE831) protein is Large ribosomal subunit protein uL10.